A 272-amino-acid polypeptide reads, in one-letter code: Probable feruloyl esterase C (272 aa).

The N-terminal stretch at 1–22 is a signal peptide; it reads MLPTILYSAILALSALTPSALA.

This sequence belongs to the faeC family.

The protein localises to the secreted. It catalyses the reaction feruloyl-polysaccharide + H2O = ferulate + polysaccharide.. Its function is as follows. Involved in degradation of plant cell walls. Hydrolyzes the feruloyl-arabinose ester bond in arabinoxylans, and the feruloyl-galactose ester bond in pectin. Active against paranitrophenyl-acetate, methyl ferulate and wheat arabinoxylan. In Aspergillus clavatus (strain ATCC 1007 / CBS 513.65 / DSM 816 / NCTC 3887 / NRRL 1 / QM 1276 / 107), this protein is Probable feruloyl esterase C (faeC-1).